Reading from the N-terminus, the 476-residue chain is Protein DETOXIFICATION 4 (476 aa).

Transmembrane regions (helical) follow at residues 35–55 (AVPM…SVMV), 66–86 (GVAL…FGLV), 117–137 (IPIC…LISL), 154–174 (LIPT…LLAQ), 176–196 (LVLP…AVCW), 208–228 (GAAL…SCYV), 260–280 (AAML…SGLL), 289–309 (VLSI…GVAA), 332–352 (LAGL…LFAF), 370–390 (VADL…TAVL), 408–428 (VVAY…SCEL), and 433–453 (LWCG…IVTA).

The protein belongs to the multi antimicrobial extrusion (MATE) (TC 2.A.66.1) family.

The protein localises to the membrane. This Arabidopsis thaliana (Mouse-ear cress) protein is Protein DETOXIFICATION 4.